Here is a 787-residue protein sequence, read N- to C-terminus: Protein FAM149A (787 aa).

Disordered regions lie at residues 22–105, 144–175, 189–226, 238–284, 432–455, 573–602, and 665–697; these read SPAV…SSGA, GSNS…APGP, EEWT…PTNF, ASES…SWRD, DGDE…GLPP, LQQR…ASSR, and AVQT…SYRG. The span at 37–46 shows a compositional bias: polar residues; that stretch reads SVDSGASTSL. Low complexity-rich tracts occupy residues 51–65 and 96–105; these read TLTL…TAAS and SGSLPSSSGA. Residues 144–155 are compositionally biased toward polar residues; that stretch reads GSNSVTASSPRN. Positions 189–200 are enriched in acidic residues; it reads EEWTSDSDSQDD. Residues 201–220 are compositionally biased toward basic and acidic residues; sequence PEGRGLSEGLRKQSSEKSKD. The segment covering 239-250 has biased composition (low complexity); the sequence is SESPSSFSSSGS. Polar residues predominate over residues 251–261; the sequence is RTPTEAHNSWP. Residues 262-274 show a composition bias toward low complexity; sequence GSSTQSSTTGLST.

The protein belongs to the FAM149 family.

The protein is Protein FAM149A (Fam149a) of Mus musculus (Mouse).